We begin with the raw amino-acid sequence, 391 residues long: 5-amino-6-(D-ribitylamino)uracil--L-tyrosine 4-hydroxyphenyl transferase (391 aa).

The region spanning 55 to 302 (VTYVINRNIN…GAVARIYLGN (248 aa)) is the Radical SAM core domain. [4Fe-4S] cluster contacts are provided by Cys-69, Cys-73, and Cys-76.

Belongs to the radical SAM superfamily. CofH family. Consists of two subunits, CofG and CofH. Requires [4Fe-4S] cluster as cofactor.

It catalyses the reaction 5-amino-6-(D-ribitylamino)uracil + L-tyrosine + S-adenosyl-L-methionine = 5-amino-5-(4-hydroxybenzyl)-6-(D-ribitylimino)-5,6-dihydrouracil + 2-iminoacetate + 5'-deoxyadenosine + L-methionine + H(+). It functions in the pathway cofactor biosynthesis; coenzyme F0 biosynthesis. Its function is as follows. Catalyzes the radical-mediated synthesis of 5-amino-5-(4-hydroxybenzyl)-6-(D-ribitylimino)-5,6-dihydrouracil from 5-amino-6-(D-ribitylamino)uracil and L-tyrosine. The polypeptide is 5-amino-6-(D-ribitylamino)uracil--L-tyrosine 4-hydroxyphenyl transferase (Nostoc sp. (strain PCC 7120 / SAG 25.82 / UTEX 2576)).